A 399-amino-acid polypeptide reads, in one-letter code: Enoyl-[acyl-carrier-protein] reductase [NADH] 2 (399 aa).

Residues 48 to 53 (GASSGF), 75 to 76 (FE), 112 to 113 (DA), and 141 to 142 (LA) each bind NAD(+). Substrate is bound at residue tyrosine 227. Tyrosine 237 acts as the Proton donor in catalysis. Residues lysine 246 and 275 to 277 (LVT) contribute to the NAD(+) site.

Belongs to the TER reductase family. Monomer.

It carries out the reaction a 2,3-saturated acyl-[ACP] + NAD(+) = a (2E)-enoyl-[ACP] + NADH + H(+). Its pathway is lipid metabolism; fatty acid biosynthesis. Its function is as follows. Involved in the final reduction of the elongation cycle of fatty acid synthesis (FAS II). Catalyzes the reduction of a carbon-carbon double bond in an enoyl moiety that is covalently linked to an acyl carrier protein (ACP). The polypeptide is Enoyl-[acyl-carrier-protein] reductase [NADH] 2 (Vibrio parahaemolyticus serotype O3:K6 (strain RIMD 2210633)).